A 146-amino-acid chain; its full sequence is 3-hydroxyacyl-[acyl-carrier-protein] dehydratase FabZ (146 aa).

The active site involves H49.

The protein belongs to the thioester dehydratase family. FabZ subfamily.

It localises to the cytoplasm. It carries out the reaction a (3R)-hydroxyacyl-[ACP] = a (2E)-enoyl-[ACP] + H2O. Functionally, involved in unsaturated fatty acids biosynthesis. Catalyzes the dehydration of short chain beta-hydroxyacyl-ACPs and long chain saturated and unsaturated beta-hydroxyacyl-ACPs. The polypeptide is 3-hydroxyacyl-[acyl-carrier-protein] dehydratase FabZ (Pseudomonas entomophila (strain L48)).